The following is a 468-amino-acid chain: Putative ankyrin repeat protein R580 (468 aa).

6 ANK repeats span residues 12–41 (DYFD…TLID), 189–218 (VINK…EINC), 249–278 (CHFD…KINS), 336–365 (SFDN…NINF), 367–393 (NMPT…DLEI), and 394–423 (HGTL…KFSL).

The chain is Putative ankyrin repeat protein R580 from Acanthamoeba polyphaga (Amoeba).